Consider the following 84-residue polypeptide: FMRFamide-like neuropeptides 26 (84 aa).

An N-terminal signal peptide occupies residues 1–19; it reads MKVMFMLALLFSSLVATSA. The propeptide occupies 20–48; the sequence is FRLPFQFFGANEDFNSGLTKRNYYESKPY. Phenylalanine amide is present on residues F61 and F82.

Belongs to the FARP (FMRFamide related peptide) family. As to expression, each flp gene is expressed in a distinct set of neurons.

Its subcellular location is the secreted. Its function is as follows. FMRFamides and FMRFamide-like peptides are neuropeptides. In Caenorhabditis elegans, this protein is FMRFamide-like neuropeptides 26.